Reading from the N-terminus, the 416-residue chain is Phosphoribosylamine--glycine ligase (416 aa).

In terms of domain architecture, ATP-grasp spans 107–313 (KDFMKKYNVK…FVDLINAAMD (207 aa)). 133 to 194 (LKKCTYPIVI…EEYLEGVEAS (62 aa)) contacts ATP. 2 residues coordinate Mg(2+): glutamate 283 and asparagine 285.

Belongs to the GARS family. Mg(2+) serves as cofactor. It depends on Mn(2+) as a cofactor.

It catalyses the reaction 5-phospho-beta-D-ribosylamine + glycine + ATP = N(1)-(5-phospho-beta-D-ribosyl)glycinamide + ADP + phosphate + H(+). Its pathway is purine metabolism; IMP biosynthesis via de novo pathway; N(1)-(5-phospho-D-ribosyl)glycinamide from 5-phospho-alpha-D-ribose 1-diphosphate: step 2/2. In Clostridium acetobutylicum (strain ATCC 824 / DSM 792 / JCM 1419 / IAM 19013 / LMG 5710 / NBRC 13948 / NRRL B-527 / VKM B-1787 / 2291 / W), this protein is Phosphoribosylamine--glycine ligase.